Consider the following 3046-residue polypeptide: MRGRRGRPPKQPAAPAAERCAPAPPPPPPPPTSGPIGGLRSRHRGSSRGRWAAAQAEVAPKTRLSSPRGGSSSRRKPPPPPPAPPSTSAPGRGGRGGGGGRTGGGGGGGHLARTTAARRAVNKVVYDDHESEEEEEEEDMVSEEEEEEDGDAEETQDSEDDEEDEMEEDDDDSDYPEEMEDDDDDASYCTESSFRSHSTYSSTPGRRKPRVHRPRSPILEEKDIPPLEFPKSSEDLMVPNEHIMNVIAIYEVLRNFGTVLRLSPFRFEDFCAALVSQEQCTLMAEMHVVLLKAVLREEDTSNTTFGPADLKDSVNSTLYFIDGMTWPEVLRVYCESDKEYHHVLPYQEAEDYPYGPVENKIKVLQFLVDQFLTTNIAREELMSEGVIQYDDHCRVCHKLGDLLCCETCSAVYHLECVKPPLEEVPEDEWQCEVCVAHKVPGVTDCVAEIQKNKPYIRHEPIGYDRSRRKYWFLNRRLIIEEDTENENEKKIWYYSTKVQLAELIDCLDKDYWEAELCKILEEMREEIHRHMDITEDLTNKARGSNKSFLAAANEEILESIRAKKGDIDNVKSPEETEKDKNETENDSKDAEKNREEFEDQSLEKDSDDKTPDDDPEQGKSEEPTEVGDKGNSVSANLGDNTTNATSEETSPSEGRSPVGCLSETPDSSNMAEKKVASELPQDVPEEPNKTCESSNTSATTTSIQPNLENSNSSSELNSSQSESAKAADDPENGERESHTPVSIQEEIVGDFKSEKSNGELSESPGAGKGASGSTRIITRLRNPDSKLSQLKSQQVAAAAHEANKLFKEGKEVLVVNSQGEISRLSTKKEVIMKGNINNYFKLGQEGKYRVYHNQYSTNSFALNKHQHREDHDKRRHLAHKFCLTPAGEFKWNGSVHGSKVLTISTLRLTITQLENNIPSSFLHPNWASHRANWIKAVQMCSKPREFALALAILECAVKPVVMLPIWRESLGHTRLHRMTSIEREEKEKVKKKEKKQEEEETMQQATWVKYTFPVKHQVWKQKGEEYRVTGYGGWSWISKTHVYRFVPKLPGNTNVNYRKSLEGTKNNMDENMDESDKRKCSRSPKKIKIEPDSEKDEVKGSDAAKGADQNEMDISKITEKKDQDVKELLDSDSDKPCKEEPMEVDDDMKTESHVNCQESSQVDVVNVSEGFHLRTSYKKKTKSSKLDGLLERRIKQFTLEEKQRLEKIKLEGGIKGIGKTSTNSSKNLSESPVITKAKEGCQSDSMRQEQSPNANNDQPEDLIQGCSESDSSVLRMSDPSHTTNKLYPKDRVLDDVSIRSPETKCPKQNSIENDIEEKVSDLASRGQEPSKSKTKGNDFFIDDSKLASADDIGTLICKNKKPLIQEESDTIVSSSKSALHSSVPKSTNDRDATPLSRAMDFEGKLGCDSESNSTLENSSDTVSIQDSSEEDMIVQNSNESISEQFRTREQDVEVLEPLKCELVSGESTGNCEDRLPVKGTEANGKKPSQQKKLEERPVNKCSDQIKLKNTTDKKNNENRESEKKGQRTSTFQINGKDNKPKIYLKGECLKEISESRVVSGNVEPKVNNINKIIPENDIKSLTVKESAIRPFINGDVIMEDFNERNSSETKSHLLSSSDAEGNYRDSLETLPSTKESDSTQTTTPSASCPESNSVNQVEDMEIETSEVKKVTSSPITSEEESNLSNDFIDENGLPINKNENVNGESKRKTVITEVTTMTSTVATESKTVIKVEKGDKQTVVSSTENCAKSTVTTTTTTVTKLSTPSTGGSVDIISVKEQSKTVVTTTVTDSLTTTGGTLVTSMTVSKEYSTRDKVKLMKFSRPKKTRSGTALPSYRKFVTKSSKKSIFVLPNDDLKKLARKGGIREVPYFNYNAKPALDIWPYPSPRPTFGITWRYRLQTVKSLAGVSLMLRLLWASLRWDDMAAKAPPGGGTTRTETSETEITTTEIIKRRDVGPYGIRSEYCIRKIICPIGVPETPKETPTPQRKGLRSSALRPKRPETPKQTGPVIIETWVAEEELELWEIRAFAERVEKEKAQAVEQQAKKRLEQQKPTVIATSTTSPTSSTTSTISPAQKVMVAPISGSVTTGTKMVLTTKVGSPATVTFQQNKNFHQTFATWVKQGQSNSGVVQVQQKVLGIIPSSTGTSQQTFTSFQPRTATVTIRPNTSGSGGTTSNSQVITGPQIRPGMTVIRTPLQQSTLGKAIIRTPVMVQPGAPQQVMTQIIRGQPVSTAVSAPNTVSSTPGQKSLTSATSTSNIQSSASQPPRPQQGQVKLTMAQLTQLTQGHGGNQGLTVVIQGQGQTTGQLQLIPQGVTVLPGPGQQLMQAAMPNGTVQRFLFTPLATTATTASTTTTTVSTTAAGTGEQRQSKLSPQMQVHQDKTLPPAQSSSVGPAEAQPQTAQPSAQPQPQTQPQSPAQPEVQTQPEVQTQTTVSSHVPSEAQPTHAQSSKPQVAAQSQPQSNVQGQSPVRVQSPSQTRIRPSTPSQLSPGQQSQVQTTTSQPIPIQPHTSLQIPSQGQPQSQPQVQSSTQTLSSGQTLNQVTVSSPSRPQLQIQQPQPQVIAVPQLQQQVQVLSQIQSQVVAQIQAQQSGVPQQIKLQLPIQIQQSSAVQTHQIQNVVTVQAASVQEQLQRVQQLRDQQQKKKQQQIEIKREHTLQASNQSEIIQKQVVMKHNAVIEHLKQKKSMTPAEREENQRMIVCNQVMKYILDKIDKEEKQAAKKRKREESVEQKRSKQNATKLSALLFKHKEQLRAEILKKRALLDKDLQIEVQEELKRDLKIKKEKDLMQLAQATAVAAPCPPVTPAPPAPPAPPPSPPPPPAVQHTGLLSTPTLPAASQKRKREEEKDSSSKSKKKKMISTTSKETKKDTKLYCICKTPYDESKFYIGCDRCQNWYHGRCVGILQSEAELIDEYVCPQCQSTEDAMTVLTPLTEKDYEGLKRVLRSLQAHKMAWPFLEPVDPNDAPDYYGVIKEPMDLATMEERVQRRYYEKLTEFVADMTKIFDNCRYYNPSDSPFYQCAEVLESFFVQKLKGFKASRSHNNKLQSTAS.

Positions 1-232 are disordered; that stretch reads MRGRRGRPPK…DIPPLEFPKS (232 aa). Pro residues predominate over residues 22 to 33; that stretch reads PAPPPPPPPPTS. The segment covering 62–72 has biased composition (low complexity); the sequence is TRLSSPRGGSS. A compositionally biased stretch (pro residues) spans 78–87; sequence PPPPPAPPST. A compositionally biased stretch (gly residues) spans 91 to 110; it reads GRGGRGGGGGRTGGGGGGGH. The segment covering 129 to 186 has biased composition (acidic residues); the sequence is HESEEEEEEEDMVSEEEEEEDGDAEETQDSEDDEEDEMEEDDDDSDYPEEMEDDDDDA. Residues 190–203 are compositionally biased toward low complexity; it reads TESSFRSHSTYSST. The span at 205–215 shows a compositional bias: basic residues; it reads GRRKPRVHRPR. Ser-216 carries the post-translational modification Phosphoserine. Residues 240 to 300 enclose the DDT domain; it reads NEHIMNVIAI…LKAVLREEDT (61 aa). The PHD-type 1 zinc finger occupies 390-437; sequence DDHCRVCHKLGDLLCCETCSAVYHLECVKPPLEEVPEDEWQCEVCVAH. Basic and acidic residues-rich tracts occupy residues 567-609 and 616-628; these read IDNV…SDDK and EQGKSEEPTEVGD. The interval 567-774 is disordered; the sequence is IDNVKSPEET…GAGKGASGST (208 aa). Ser-572 carries the post-translational modification Phosphoserine. Residues 574–604 adopt a coiled-coil conformation; sequence EETEKDKNETENDSKDAEKNREEFEDQSLEK. Composition is skewed to polar residues over residues 631–653 and 690–705; these read NSVSANLGDNTTNATSEETSPSE and TCESSNTSATTTSIQP. The tract at residues 640-749 is interaction with KEAP1; that stretch reads NTTNATSEET…PVSIQEEIVG (110 aa). Positions 706-723 are enriched in low complexity; it reads NLENSNSSSELNSSQSES. The segment covering 725–738 has biased composition (basic and acidic residues); the sequence is KAADDPENGERESH. 2 positions are modified to phosphoserine: Ser-763 and Ser-817. Residues 839 to 921 form an interaction with MAZ region; the sequence is YFKLGQEGKY…QLENNIPSSF (83 aa). Lys-880 bears the N6-acetyllysine mark. A coiled-coil region spans residues 978 to 1007; it reads MTSIEREEKEKVKKKEKKQEEEETMQQATW. Residues 1057–1157 are disordered; that stretch reads YRKSLEGTKN…MKTESHVNCQ (101 aa). Thr-1064 is subject to Phosphothreonine. Basic and acidic residues-rich tracts occupy residues 1087 to 1102 and 1113 to 1152; these read IKIEPDSEKDEVKGSD and DISKITEKKDQDVKELLDSDSDKPCKEEPMEVDDDMKTES. Residues Lys-1088, Lys-1138, and Lys-1209 each participate in a glycyl lysine isopeptide (Lys-Gly) (interchain with G-Cter in SUMO2) cross-link. 4 disordered regions span residues 1215-1339, 1371-1448, 1465-1537, and 1605-1706; these read KGIG…GNDF, IVSS…FRTR, GEST…NGKD, and NSSE…GESK. 3 stretches are compositionally biased toward polar residues: residues 1220 to 1232, 1242 to 1257, and 1266 to 1285; these read TSTNSSKNLSESP, QSDSMRQEQSPNANND, and CSESDSSVLRMSDPSHTTNK. The residue at position 1231 (Ser-1231) is a Phosphoserine. Residues 1287-1305 show a composition bias toward basic and acidic residues; that stretch reads YPKDRVLDDVSIRSPETKC. The residue at position 1300 (Ser-1300) is a Phosphoserine. Thr-1303 is subject to Phosphothreonine. Ser-1310 bears the Phosphoserine mark. A compositionally biased stretch (low complexity) spans 1372–1386; it reads VSSSKSALHSSVPKS. 2 stretches are compositionally biased toward polar residues: residues 1409 to 1426 and 1434 to 1444; these read SESNSTLENSSDTVSIQD and VQNSNESISEQ. A compositionally biased stretch (basic and acidic residues) spans 1491 to 1525; that stretch reads KKLEERPVNKCSDQIKLKNTTDKKNNENRESEKKG. Polar residues predominate over residues 1629–1656; sequence TLPSTKESDSTQTTTPSASCPESNSVNQ. A Glycyl lysine isopeptide (Lys-Gly) (interchain with G-Cter in SUMO2) cross-link involves residue Lys-1730. 2 disordered regions span residues 1973–2003 and 2041–2070; these read VPETPKETPTPQRKGLRSSALRPKRPETPKQ and QAKKRLEQQKPTVIATSTTSPTSSTTSTIS. Residues 2022–2050 adopt a coiled-coil conformation; sequence EIRAFAERVEKEKAQAVEQQAKKRLEQQK. A compositionally biased stretch (low complexity) spans 2054–2070; it reads IATSTTSPTSSTTSTIS. A Phosphoserine modification is found at Ser-2098. At Arg-2155 the chain carries Omega-N-methylarginine. The segment at 2160–2180 is disordered; sequence TIRPNTSGSGGTTSNSQVITG. 3 positions are modified to asymmetric dimethylarginine: Arg-2162, Arg-2184, and Arg-2191. A compositionally biased stretch (polar residues) spans 2232-2256; it reads VSAPNTVSSTPGQKSLTSATSTSNI. Disordered stretches follow at residues 2232 to 2270, 2346 to 2549, 2714 to 2733, and 2795 to 2858; these read VSAPNTVSSTPGQKSLTSATSTSNIQSSASQPPRPQQGQ, TAST…RPQL, QAAKKRKREESVEQKRSKQN, and PCPP…ISTT. Composition is skewed to low complexity over residues 2257–2270 and 2346–2362; these read QSSASQPPRPQQGQ and TASTTTTTVSTTAAGTG. A compositionally biased stretch (polar residues) spans 2363 to 2375; sequence EQRQSKLSPQMQV. The span at 2391 to 2431 shows a compositional bias: low complexity; that stretch reads PAEAQPQTAQPSAQPQPQTQPQSPAQPEVQTQPEVQTQTTV. The segment covering 2432-2485 has biased composition (polar residues); sequence SSHVPSEAQPTHAQSSKPQVAAQSQPQSNVQGQSPVRVQSPSQTRIRPSTPSQL. The residue at position 2465 (Ser-2465) is a Phosphoserine. Over residues 2486 to 2538 the composition is skewed to low complexity; it reads SPGQQSQVQTTTSQPIPIQPHTSLQIPSQGQPQSQPQVQSSTQTLSSGQTLNQ. The stretch at 2706-2732 forms a coiled coil; it reads DKIDKEEKQAAKKRKREESVEQKRSKQ. The span at 2714–2729 shows a compositional bias: basic and acidic residues; sequence QAAKKRKREESVEQKR. A compositionally biased stretch (pro residues) spans 2795-2818; sequence PCPPVTPAPPAPPAPPPSPPPPPA. A compositionally biased stretch (basic and acidic residues) spans 2838-2847; that stretch reads KREEEKDSSS. A PHD-type 2 zinc finger spans residues 2867–2918; that stretch reads KLYCICKTPYDESKFYIGCDRCQNWYHGRCVGILQSEAELIDEYVCPQCQST. The Bromo domain maps to 2927–3031; sequence PLTEKDYEGL…SFFVQKLKGF (105 aa).

Belongs to the PBTF family. Interacts with MAZ. Interacts with KEAP1. Component of the NURF-1 ISWI chromatin remodeling complex (also called the nucleosome-remodeling factor (NURF) complex) at least composed of SMARCA1 (isoform 2), BPTF, RBBP4 and RBBP7. Within the complex interacts with isoform 2 of SMARCA1. Component of the BPFT-SMARCA1 complex at least composed of SMARCA1 (isoform 1), BPFT, RBBP4 and RBBP7; the complex is catalytically inactive and does not remodel chromatin. Within the complex interacts with isoform 1 of SMARCA1. Component of the NURF-5 ISWI chromatin remodeling complex at least composed of SMARCA5/SNF2H and BPTF. Within NURF-5 ISWI chromatin remodeling complex interacts with SMARCA5/SNF2H. In terms of processing, phosphorylation enhances DNA-binding. Highly susceptible to proteolysis. In terms of tissue distribution, ubiquitously expressed, with highest levels in testis. Present in kidney, liver and brain. In the brain, highest levels are found in motor cortex (at protein level).

The protein localises to the cytoplasm. The protein resides in the nucleus. Its function is as follows. Regulatory subunit of the ATP-dependent NURF-1 and NURF-5 ISWI chromatin remodeling complexes, which form ordered nucleosome arrays on chromatin and facilitate access to DNA during DNA-templated processes such as DNA replication, transcription, and repair. The NURF-1 ISWI chromatin remodeling complex has a lower ATP hydrolysis rate than the NURF-5 ISWI chromatin remodeling complex. Within the NURF-1 ISWI chromatin-remodeling complex, binds to the promoters of En1 and En2 to positively regulate their expression and promote brain development. Histone-binding protein which binds to H3 tails trimethylated on 'Lys-4' (H3K4me3), which mark transcription start sites of active genes. Binds to histone H3 tails dimethylated on 'Lys-4' (H3K4Me2) to a lesser extent. May also regulate transcription through direct binding to DNA or transcription factors. The polypeptide is Nucleosome-remodeling factor subunit BPTF (BPTF) (Homo sapiens (Human)).